A 150-amino-acid chain; its full sequence is Nitric oxide reductase subunit C (150 aa).

Residues 13 to 29 form a helical; Signal-anchor membrane-spanning segment; the sequence is VFYGGSIFFILIFGALT. Cysteine 62, cysteine 65, and histidine 66 together coordinate heme c.

As to quaternary structure, heterodimer of cytochromes b (large subunit) and c (small subunit).

The protein resides in the cell membrane. In terms of biological role, component of the anaerobic respiratory chain that transforms nitrate to dinitrogen (denitrification). This chain is Nitric oxide reductase subunit C (norC), found in Paracoccus denitrificans.